The sequence spans 140 residues: ATP synthase epsilon chain (140 aa).

This sequence belongs to the ATPase epsilon chain family. As to quaternary structure, F-type ATPases have 2 components, CF(1) - the catalytic core - and CF(0) - the membrane proton channel. CF(1) has five subunits: alpha(3), beta(3), gamma(1), delta(1), epsilon(1). CF(0) has three main subunits: a, b and c.

Its subcellular location is the cell inner membrane. In terms of biological role, produces ATP from ADP in the presence of a proton gradient across the membrane. The protein is ATP synthase epsilon chain of Legionella pneumophila (strain Paris).